The primary structure comprises 364 residues: Anionic peroxidase (364 aa).

The N-terminal stretch at 1–20 is a signal peptide; the sequence is MASFMKQLSLVLSFIALALA. Residues 21-66 constitute a propeptide that is removed on maturation; it reads GCAVYQNTQTAMKDQLKVTPTWLDNTLKSTNLLSLGLGKPSGGKLG. The active-site Proton acceptor is His-99. Residues Asp-100, Val-103, Gly-105, and Asp-107 each contribute to the Ca(2+) site. Cys-101 and Cys-106 are disulfide-bonded. Residues Asn-113, Asn-188, Asn-202, and Asn-216 are each glycosylated (N-linked (GlcNAc...) asparagine). Intrachain disulfides connect Cys-155–Cys-343 and Cys-234–Cys-255. His-227 is a binding site for heme b. Thr-228 serves as a coordination point for Ca(2+). 2 N-linked (GlcNAc...) asparagine glycosylation sites follow: Asn-254 and Asn-260. Residues Asp-268, Thr-270, and Asp-275 each coordinate Ca(2+). Asn-299 is a glycosylation site (N-linked (GlcNAc...) asparagine).

The protein belongs to the peroxidase family. Classical plant (class III) peroxidase subfamily. Ca(2+) is required as a cofactor. It depends on heme b as a cofactor. Highly expressed in suspension cultured cells and calli. Weak expression also found in the stems of intact plants. No expression in leaf, tuberous root and non-tuberous root.

The protein resides in the secreted. The enzyme catalyses 2 a phenolic donor + H2O2 = 2 a phenolic radical donor + 2 H2O. Removal of H(2)O(2), oxidation of toxic reductants, biosynthesis and degradation of lignin, suberization, auxin catabolism, response to environmental stresses such as wounding, pathogen attack and oxidative stress. These functions might be dependent on each isozyme/isoform in each plant tissue. In terms of biological role, may contribute to protection against cold-induced oxidative stress. The chain is Anionic peroxidase from Ipomoea batatas (Sweet potato).